A 239-amino-acid polypeptide reads, in one-letter code: Large ribosomal subunit protein uL1 (239 aa).

This sequence belongs to the universal ribosomal protein uL1 family. In terms of assembly, part of the 50S ribosomal subunit.

Functionally, binds directly to 23S rRNA. The L1 stalk is quite mobile in the ribosome, and is involved in E site tRNA release. Protein L1 is also a translational repressor protein, it controls the translation of the L11 operon by binding to its mRNA. This Rickettsia rickettsii (strain Iowa) protein is Large ribosomal subunit protein uL1.